Reading from the N-terminus, the 221-residue chain is ATP synthase subunit delta (221 aa).

Basic and acidic residues predominate over residues 1–13 (MGPVPEEHQRESE). The segment at 1–31 (MGPVPEEHQRESETVASNGANESGAAVTGIP) is disordered.

Belongs to the ATPase delta chain family. As to quaternary structure, F-type ATPases have 2 components, F(1) - the catalytic core - and F(0) - the membrane proton channel. F(1) has five subunits: alpha(3), beta(3), gamma(1), delta(1), epsilon(1). F(0) has three main subunits: a(1), b(2) and c(10-14). The alpha and beta chains form an alternating ring which encloses part of the gamma chain. F(1) is attached to F(0) by a central stalk formed by the gamma and epsilon chains, while a peripheral stalk is formed by the delta and b chains.

It localises to the cell inner membrane. F(1)F(0) ATP synthase produces ATP from ADP in the presence of a proton or sodium gradient. F-type ATPases consist of two structural domains, F(1) containing the extramembraneous catalytic core and F(0) containing the membrane proton channel, linked together by a central stalk and a peripheral stalk. During catalysis, ATP synthesis in the catalytic domain of F(1) is coupled via a rotary mechanism of the central stalk subunits to proton translocation. Its function is as follows. This protein is part of the stalk that links CF(0) to CF(1). It either transmits conformational changes from CF(0) to CF(1) or is implicated in proton conduction. This Granulibacter bethesdensis (strain ATCC BAA-1260 / CGDNIH1) protein is ATP synthase subunit delta.